Reading from the N-terminus, the 131-residue chain is Interleukin-13 (131 aa).

The signal sequence occupies residues 1–18; that stretch reads MALWLTLVIALTCFGGLA. 4 N-linked (GlcNAc...) asparagine glycosylation sites follow: asparagine 39, asparagine 50, asparagine 58, and asparagine 74. 2 cysteine pairs are disulfide-bonded: cysteine 49-cysteine 78 and cysteine 66-cysteine 92.

It belongs to the IL-4/IL-13 family. Interacts with IL13RA2.

It localises to the secreted. Its function is as follows. Cytokine that plays important roles in allergic inflammation and immune response to parasite infection. Synergizes with IL2 in regulating interferon-gamma synthesis. Stimulates B-cell proliferation, and activation of eosinophils, basophils, and mast cells. Plays an important role in controlling IL33 activity by modulating the production of transmembrane and soluble forms of interleukin-1 receptor-like 1/IL1RL1. Displays the capacity to antagonize Th1-driven proinflammatory immune response and downregulates synthesis of many proinflammatory cytokines including IL1, IL6, IL10, IL12 and TNF-alpha through a mechanism that partially involves suppression of NF-kappa-B. Also functions on nonhematopoietic cells, including endothelial cells where it induces vascular cell adhesion protein 1/VCAM1, which is important in the recruitment of eosinophils. Exerts its biological effects through its receptors which comprises the IL4R chain and the IL13RA1 chain, to activate JAK1 and TYK2, leading to the activation of STAT6. Aside from IL13RA1, another receptor IL13RA2 acts as a high affinity decoy for IL13 and mediates internalization and depletion of extracellular IL13. The protein is Interleukin-13 (IL13) of Sus scrofa (Pig).